The primary structure comprises 165 residues: Ribosome maturation factor RimM (165 aa).

One can recognise a PRC barrel domain in the interval 94–165 (EDEFYIADLT…YVILNYQREA (72 aa)).

Belongs to the RimM family. In terms of assembly, binds ribosomal protein uS19.

It localises to the cytoplasm. Its function is as follows. An accessory protein needed during the final step in the assembly of 30S ribosomal subunit, possibly for assembly of the head region. Essential for efficient processing of 16S rRNA. May be needed both before and after RbfA during the maturation of 16S rRNA. It has affinity for free ribosomal 30S subunits but not for 70S ribosomes. The polypeptide is Ribosome maturation factor RimM (Rickettsia rickettsii (strain Sheila Smith)).